Consider the following 399-residue polypeptide: F-box/kelch-repeat protein At5g48980 (399 aa).

The span at 1–11 (MADSQRLSTAS) shows a compositional bias: polar residues. Residues 1–29 (MADSQRLSTASGVKDGQPPWKKKKLSNDT) form a disordered region. The 47-residue stretch at 29 to 75 (TTSNPSLPYDVILIILARVSRSYYTNLSLVSKSFRSILTSPELYKTR) folds into the F-box domain. Residues 199-248 (IVYLPGSFESPDSLNCVEVYNTMTQTWKPVPPEKRMFKLENLEKKIYYKS) form a Kelch repeat.

This Arabidopsis thaliana (Mouse-ear cress) protein is F-box/kelch-repeat protein At5g48980.